Reading from the N-terminus, the 28-residue chain is 3,4-dihydroxybenzoate decarboxylase (28 aa).

In terms of assembly, homopentamer.

The enzyme catalyses 3,4-dihydroxybenzoate + H(+) = catechol + CO2. Inhibited by oxygen. Completely inhibited by HgCl(2). Partially inhibited by ZnSO(4), 2,3,4-trihydroxybeonzoate and 3,4,5-trihydroxybeonzoate. Unaffected by KCl, MnCl(2) or EDTA. Not stimulated by thiamine phosphate, pyridoxal 5'-phosphate or biotin. Not inhibited by hydroxylamine, NaBH(4) or avidin. In terms of biological role, reversibly catalyzes the decarboxylation of 3,4-dihydroxybenzoate to catechol. Inactive toward 4-hydroxybenzoate and other benzoate derivatives. The sequence is that of 3,4-dihydroxybenzoate decarboxylase from Sedimentibacter hydroxybenzoicus (Clostridium hydroxybenzoicum).